Here is a 434-residue protein sequence, read N- to C-terminus: [Pyruvate dehydrogenase (acetyl-transferring)] kinase isozyme 1, mitochondrial (434 aa).

Residues 1–26 (MRLARLLRGGTSVRPLCAVPCASRSL) constitute a mitochondrion transit peptide. Phosphotyrosine; by FGFR1 is present on Y136. The Histidine kinase domain maps to 161-391 (TEYKESFGVD…DAVIYIKALS (231 aa)). Y241 carries the post-translational modification Phosphotyrosine; by FGFR1, ABL1, FLT3 and JAK2. Y242 carries the phosphotyrosine; by FGFR1 modification. Residues 277 to 284 (ELFKNAMR), D316, 335 to 336 (ST), and 352 to 357 (GFGYGL) each bind ATP. T336 bears the Phosphothreonine mark. N6-succinyllysine is present on K403.

It belongs to the PDK/BCKDK protein kinase family. In terms of assembly, homodimer, and heterodimer with PDK2. Interacts with the pyruvate dehydrogenase complex subunit DLAT, and is part of the multimeric pyruvate dehydrogenase complex that contains multiple copies of pyruvate dehydrogenase (E1), dihydrolipoamide acetyltransferase (DLAT, E2) and lipoamide dehydrogenase (DLD, E3). Interacts with phosphoglycerate kinase PGK1; the interaction is direct, occurs under hypoxic conditions and leads to PDK1-mediated inhibition of pyruvate dehydrogenase complex activity. Phosphorylated by constitutively activated ABL1, FGFR1, FLT3 and JAK2 (in vitro), and this may also occur in cancer cells that express constitutively activated ABL1, FGFR1, FLT3 and JAK2. Phosphorylation at Tyr-241 and Tyr-242 strongly increases kinase activity, while phosphorylation at Tyr-136 has a lesser effect. Phosphorylated under hypoxic conditions at Thr-336 by phosphoglycerate kinase PGK1 which has an activating effect.

The protein localises to the mitochondrion matrix. The catalysed reaction is L-seryl-[pyruvate dehydrogenase E1 alpha subunit] + ATP = O-phospho-L-seryl-[pyruvate dehydrogenase E1 alpha subunit] + ADP + H(+). Functionally, kinase that plays a key role in regulation of glucose and fatty acid metabolism and homeostasis via phosphorylation of the pyruvate dehydrogenase subunits PDHA1 and PDHA2. This inhibits pyruvate dehydrogenase activity, and thereby regulates metabolite flux through the tricarboxylic acid cycle, down-regulates aerobic respiration and inhibits the formation of acetyl-coenzyme A from pyruvate. Plays an important role in cellular responses to hypoxia and is important for cell proliferation under hypoxia. This chain is [Pyruvate dehydrogenase (acetyl-transferring)] kinase isozyme 1, mitochondrial (Pdk1), found in Mus musculus (Mouse).